The chain runs to 825 residues: NT-3 growth factor receptor (825 aa).

The first 31 residues, Met1–Ala31, serve as a signal peptide directing secretion. Intrachain disulfides connect Cys32–Cys38 and Cys36–Cys45. Topologically, residues Cys32 to Thr429 are extracellular. Asn68, Asn72, and Asn79 each carry an N-linked (GlcNAc...) asparagine glycan. 2 LRR repeats span residues Gly104–Lys125 and His128–Thr149. N-linked (GlcNAc...) asparagine glycans are attached at residues Asn133 and Asn163. The region spanning Asn160–Leu209 is the LRRCT domain. 2 disulfides stabilise this stretch: Cys164/Cys189 and Cys166/Cys207. Asn203, Asn218, Asn232, Asn259, Asn267, Asn272, and Asn294 each carry an N-linked (GlcNAc...) asparagine glycan. Ig-like C2-type domains are found at residues Pro210–Thr300 and Ser309–Asn382. A disulfide bridge connects residues Cys231 and Cys284. A disulfide bond links Cys320 and Cys362. 2 N-linked (GlcNAc...) asparagine glycosylation sites follow: Asn375 and Asn388. The chain crosses the membrane as a helical span at residues Phe430–Ile453. The Cytoplasmic portion of the chain corresponds to Asn454–Gly825. Residue Ser493 is modified to Phosphoserine. Tyr516 carries the post-translational modification Phosphotyrosine; by autocatalysis. The Protein kinase domain maps to Ile538 to Gly825. Residues Leu544–Val552 and Lys572 each bind ATP. The active-site Proton acceptor is Asp679. Phosphotyrosine; by autocatalysis is present on residues Tyr705, Tyr709, and Tyr710.

The protein belongs to the protein kinase superfamily. Tyr protein kinase family. Insulin receptor subfamily. In terms of assembly, exists in a dynamic equilibrium between monomeric (low affinity) and dimeric (high affinity) structures. Binds SH2B2. Interacts with SQSTM1 and KIDINS220. Interacts with PTPRS. Interacts with MAPK8IP3/JIP3. In terms of processing, ligand-mediated auto-phosphorylation.

It localises to the membrane. The catalysed reaction is L-tyrosyl-[protein] + ATP = O-phospho-L-tyrosyl-[protein] + ADP + H(+). Receptor tyrosine kinase involved in nervous system and probably heart development. Upon binding of its ligand NTF3/neurotrophin-3, NTRK3 autophosphorylates and activates different signaling pathways, including the phosphatidylinositol 3-kinase/AKT and the MAPK pathways, that control cell survival and differentiation. This is NT-3 growth factor receptor (NTRK3) from Saimiri boliviensis boliviensis (Bolivian squirrel monkey).